We begin with the raw amino-acid sequence, 752 residues long: GTPase-activating protein rrc-1 (752 aa).

Positions 165–244 (PAIAAAVVTK…PRDCVMLIDD (80 aa)) constitute an SH3 domain. Residues 281 to 463 (LELTELFMRT…FCIENSDSLF (183 aa)) enclose the Rho-GAP domain. Disordered stretches follow at residues 523–552 (STGE…ATFQ) and 582–609 (RSMR…GANN).

Functionally, functions as a GTPase-activating protein (GAP) for ced-10/RAC-1 and CDC42. The sequence is that of GTPase-activating protein rrc-1 from Caenorhabditis briggsae.